The primary structure comprises 505 residues: Glycerol kinase (505 aa).

Threonine 15 provides a ligand contact to ADP. 3 residues coordinate ATP: threonine 15, threonine 16, and serine 17. Threonine 15 provides a ligand contact to sn-glycerol 3-phosphate. ADP is bound at residue arginine 19. Arginine 85, glutamate 86, tyrosine 136, and aspartate 249 together coordinate sn-glycerol 3-phosphate. Arginine 85, glutamate 86, tyrosine 136, aspartate 249, and glutamine 250 together coordinate glycerol. 2 residues coordinate ADP: threonine 271 and glycine 314. ATP contacts are provided by threonine 271, glycine 314, glutamine 318, and glycine 415. ADP is bound by residues glycine 415 and asparagine 419.

It belongs to the FGGY kinase family.

It carries out the reaction glycerol + ATP = sn-glycerol 3-phosphate + ADP + H(+). It functions in the pathway polyol metabolism; glycerol degradation via glycerol kinase pathway; sn-glycerol 3-phosphate from glycerol: step 1/1. Inhibited by fructose 1,6-bisphosphate (FBP). In terms of biological role, key enzyme in the regulation of glycerol uptake and metabolism. Catalyzes the phosphorylation of glycerol to yield sn-glycerol 3-phosphate. The protein is Glycerol kinase of Mycoplasma mycoides subsp. mycoides SC (strain CCUG 32753 / NCTC 10114 / PG1).